We begin with the raw amino-acid sequence, 353 residues long: Photosystem II D2 protein (353 aa).

At T2 the chain carries N-acetylthreonine. At T2 the chain carries Phosphothreonine. Residues 41-61 traverse the membrane as a helical segment; that stretch reads CAYFALGGWFTGTTFVTSWYT. H118 contacts chlorophyll a. Residues 125–141 traverse the membrane as a helical segment; it reads GFMLRQFELARSVQLRP. Q130 and N143 together coordinate pheophytin a. The helical transmembrane segment at 153–166 threads the bilayer; it reads VFVSVFLIYPLGQS. H198 is a chlorophyll a binding site. Residues 208-228 traverse the membrane as a helical segment; it reads AALLCAIHGATVENTLFEDGD. A plastoquinone contacts are provided by H215 and F262. H215 provides a ligand contact to Fe cation. H269 provides a ligand contact to Fe cation. Residues 279–295 traverse the membrane as a helical segment; the sequence is GLWMSALGVVGLALNLR.

It belongs to the reaction center PufL/M/PsbA/D family. In terms of assembly, PSII is composed of 1 copy each of membrane proteins PsbA, PsbB, PsbC, PsbD, PsbE, PsbF, PsbH, PsbI, PsbJ, PsbK, PsbL, PsbM, PsbT, PsbX, PsbY, PsbZ, Psb30/Ycf12, at least 3 peripheral proteins of the oxygen-evolving complex and a large number of cofactors. It forms dimeric complexes. The cofactor is The D1/D2 heterodimer binds P680, chlorophylls that are the primary electron donor of PSII, and subsequent electron acceptors. It shares a non-heme iron and each subunit binds pheophytin, quinone, additional chlorophylls, carotenoids and lipids. There is also a Cl(-1) ion associated with D1 and D2, which is required for oxygen evolution. The PSII complex binds additional chlorophylls, carotenoids and specific lipids..

The protein resides in the plastid. Its subcellular location is the chloroplast thylakoid membrane. It carries out the reaction 2 a plastoquinone + 4 hnu + 2 H2O = 2 a plastoquinol + O2. Functionally, photosystem II (PSII) is a light-driven water:plastoquinone oxidoreductase that uses light energy to abstract electrons from H(2)O, generating O(2) and a proton gradient subsequently used for ATP formation. It consists of a core antenna complex that captures photons, and an electron transfer chain that converts photonic excitation into a charge separation. The D1/D2 (PsbA/PsbD) reaction center heterodimer binds P680, the primary electron donor of PSII as well as several subsequent electron acceptors. D2 is needed for assembly of a stable PSII complex. This chain is Photosystem II D2 protein, found in Olimarabidopsis pumila (Dwarf rocket).